The sequence spans 286 residues: Transcription factor MYB62 (286 aa).

HTH myb-type domains lie at 16 to 68 and 69 to 123; these read DEEL…LNYL and KPDI…QKQA. 2 DNA-binding regions (H-T-H motif) span residues 44-68 and 96-119; these read WNHVAKCAGLKRTGKSCRLRWLNYL and WSKIAQYLPGRTDNEIKNYWRTRV.

Expressed in leaves and flowers.

The protein resides in the nucleus. Its function is as follows. Transcription repressor of phosphate (Pi) starvation-induced genes. Negatively regulates Pi starvation responses via the repression of gibberellic acid (GA) biosynthesis and signaling. Modulates root architecture, phosphatase activity, and Pi uptake and accumulation. This is Transcription factor MYB62 from Arabidopsis thaliana (Mouse-ear cress).